The primary structure comprises 338 residues: MASGGGAAFEELPHDGTCDECEPDEAPGAEEVCRECGFCYCRHHAEAHGQKFPRHHLAEYVHCAAQAWTPGARGDGAGEEAVEAPVENEKALENEAGEGIESEEDSEPEEESETEEESEDESEEDSEEEMEDEQESEAEEDNQEEGESEAEGETEAESEFDPEIEMEAERVAKRKCPDHGLDLSTYCQEDKQLICVLCPVIGAHHGHHLSTLDEAFEELRSKDSGGLKAAMIELVERLKFKSSDPKVTRDQMKMFIQQEFKKVQKVIADEEQKALHLVDIQEAMATAHVTEILADIQSHMDRLMTQMAQAKEQLDTSNESAEPKAEGDEEEPGGTDED.

Disordered regions lie at residues Met1 to Glu25 and Ala72 to Pro162. Positions Glu95–Pro162 are enriched in acidic residues. Positions Glu109–Glu153 form a coiled coil. The B box-type zinc-finger motif lies at Val171–Leu212. Residues Cys176, His179, Cys198, and His204 each contribute to the Zn(2+) site. A coiled-coil region spans residues Gln257–Glu322. Positions Met307 to Asp338 are disordered. Positions Gly327–Asp338 are enriched in acidic residues.

Interacts (via coiled coil) with TRIM17 (via coiled coil).

May play a role in the process of differentiation and maturation of neuronal cells. May regulate the activity of TRIM17. Is a negative regulator of PAX6 expression. This is Tripartite motif-containing protein 44 (TRIM44) from Bos taurus (Bovine).